The following is a 288-amino-acid chain: Elongation factor Ts (288 aa).

The segment at 79–82 (TDFV) is involved in Mg(2+) ion dislocation from EF-Tu.

This sequence belongs to the EF-Ts family.

It localises to the cytoplasm. Functionally, associates with the EF-Tu.GDP complex and induces the exchange of GDP to GTP. It remains bound to the aminoacyl-tRNA.EF-Tu.GTP complex up to the GTP hydrolysis stage on the ribosome. The chain is Elongation factor Ts from Ehrlichia canis (strain Jake).